A 144-amino-acid polypeptide reads, in one-letter code: Eukaryotic translation initiation factor 1A (144 aa).

The segment covering 1 to 15 (MPKNKGKGGKNRRRG) has biased composition (basic residues). Disordered stretches follow at residues 1–26 (MPKNKGKGGKNRRRGKNENESEKREL) and 114–144 (KINETDTFGPGDDDEIQFDDIGDDDEDIDDI). The span at 16-26 (KNENESEKREL) shows a compositional bias: basic and acidic residues. One can recognise an S1-like domain in the interval 22–96 (EKRELVFKED…NKADVILKYN (75 aa)). The segment covering 124 to 144 (GDDDEIQFDDIGDDDEDIDDI) has biased composition (acidic residues).

It belongs to the eIF-1A family. As to quaternary structure, component of the 43S pre-initiation complex (43S PIC), which is composed of the 40S ribosomal subunit, EIF1, eIF1A (EIF1AX), eIF3 complex, EIF5 and eIF2-GTP-initiator tRNA complex (eIF2 ternary complex). Interacts with EIF5; this interaction contributes to the maintenance of EIF1 within the open 43S PIC. Interacts through its C-terminal domain (CTD) with the CTD of EIF5B; from the location of the start codon by the 43S complex until the formation of the 80S complex.

Its subcellular location is the cytoplasm. Component of the 43S pre-initiation complex (43S PIC), which binds to the mRNA cap-proximal region, scans mRNA 5'-untranslated region, and locates the initiation codon. This protein enhances formation of the cap-proximal complex. Together with EIF1, facilitates scanning, start codon recognition, promotion of the assembly of 48S complex at the initiation codon (43S PIC becomes 48S PIC after the start codon is reached), and dissociation of aberrant complexes. After start codon location, together with EIF5B orients the initiator methionine-tRNA in a conformation that allows 60S ribosomal subunit joining to form the 80S initiation complex. Is released after 80S initiation complex formation, just after GTP hydrolysis by EIF5B, and before release of EIF5B. Its globular part is located in the A site of the 40S ribosomal subunit. Its interaction with EIF5 during scanning contribute to the maintenance of EIF1 within the open 43S PIC. In contrast to yeast orthologs, does not bind EIF1. The polypeptide is Eukaryotic translation initiation factor 1A (Eif1a) (Mus musculus (Mouse)).